A 396-amino-acid polypeptide reads, in one-letter code: Putative cytochrome P450 YjiB (396 aa).

Cys-349 lines the heme pocket.

Belongs to the cytochrome P450 family. Heme serves as cofactor.

The chain is Putative cytochrome P450 YjiB (yjiB) from Bacillus subtilis (strain 168).